Here is a 125-residue protein sequence, read N- to C-terminus: MGSMFSGNRMSKEEMEVVVNKAKEIVSAYPVVVFSKTYCGYCQRVKQLLTQLGATFKVLELDEMSDGGEIQSALSEWTGQTTVPNVFIKGNHIGGCDRVMETNKQGKLVPLLTEAGAIADNSSQL.

In terms of domain architecture, Glutaredoxin spans 19 to 119 (VNKAKEIVSA…PLLTEAGAIA (101 aa)). Cys-39 and Cys-42 form a disulfide bridge.

It belongs to the glutaredoxin family. CPYC subfamily.

Its subcellular location is the cytoplasm. Its function is as follows. Has a glutathione-disulfide oxidoreductase activity in the presence of NADPH and glutathione reductase. Reduces low molecular weight disulfides and proteins. This Arabidopsis thaliana (Mouse-ear cress) protein is Glutaredoxin-C1 (GRXC1).